The sequence spans 583 residues: Selenocysteine-specific elongation factor (583 aa).

One can recognise a tr-type G domain in the interval 5-203 (RVNVNVGVLG…LLKSQISIPT (199 aa)). Residues 14–21 (GHIDSGKT) form a G1 region. Residues G19, T21, and A22 each coordinate GTP. Residue T21 coordinates Mg(2+). The segment at 46–50 (GITLD) is G2. Residues T48 and D78 each coordinate Mg(2+). The interval 78 to 81 (DCPG) is G3. The segment at 132–135 (NKID) is G4. Residues D135 and K173 each contribute to the GTP site. Positions 171 to 173 (AAK) are G5. Residues 371 to 390 (MPTATEGDDEADPKAGHAPG) are disordered. S524 carries the post-translational modification Phosphoserine. The disordered stretch occupies residues 528–562 (KKILTPTLKKRSRAGRGETTKPEEGTERPEPIQPV). The residue at position 532 (T532) is a Phosphothreonine. The Nuclear localization signal motif lies at 534 to 540 (TLKKRSR). The span at 542-557 (GRGETTKPEEGTERPE) shows a compositional bias: basic and acidic residues. R543 bears the Omega-N-methylarginine mark.

It belongs to the TRAFAC class translation factor GTPase superfamily. Classic translation factor GTPase family. SelB subfamily. Requires Mg(2+) as cofactor. Mn(2+) is required as a cofactor.

The protein resides in the cytoplasm. It localises to the nucleus. The catalysed reaction is GTP + H2O = GDP + phosphate + H(+). In terms of biological role, translation factor required for the incorporation of the rare amino acid selenocysteine encoded by UGA codons. Replaces the eRF1-eRF3-GTP ternary complex for the insertion of selenocysteine directed by the UGA codon. Insertion of selenocysteine at UGA codons is mediated by SECISBP2 and EEFSEC: SECISBP2 (1) specifically binds the SECIS sequence once the 80S ribosome encounters an in-frame UGA codon and (2) contacts the RPS27A/eS31 of the 40S ribosome before ribosome stalling. (3) GTP-bound EEFSEC then delivers selenocysteinyl-tRNA(Sec) to the 80S ribosome and adopts a preaccommodated state conformation. (4) After GTP hydrolysis, EEFSEC dissociates from the assembly, selenocysteinyl-tRNA(Sec) accommodates, and peptide bond synthesis and selenoprotein elongation occur. The protein is Selenocysteine-specific elongation factor (Eefsec) of Mus musculus (Mouse).